Consider the following 44-residue polypeptide: Cytochrome b559 subunit beta (44 aa).

The chain crosses the membrane as a helical span at residues 19–35 (WLAIHGIAIPTVFFLGA). A heme-binding site is contributed by histidine 23.

The protein belongs to the PsbE/PsbF family. Heterodimer of an alpha subunit and a beta subunit. PSII is composed of 1 copy each of membrane proteins PsbA, PsbB, PsbC, PsbD, PsbE, PsbF, PsbH, PsbI, PsbJ, PsbK, PsbL, PsbM, PsbT, PsbX, PsbY, PsbZ, Psb30/Ycf12, at least 3 peripheral proteins of the oxygen-evolving complex and a large number of cofactors. It forms dimeric complexes. Requires heme b as cofactor.

The protein localises to the plastid. It is found in the chloroplast thylakoid membrane. Functionally, this b-type cytochrome is tightly associated with the reaction center of photosystem II (PSII). PSII is a light-driven water:plastoquinone oxidoreductase that uses light energy to abstract electrons from H(2)O, generating O(2) and a proton gradient subsequently used for ATP formation. It consists of a core antenna complex that captures photons, and an electron transfer chain that converts photonic excitation into a charge separation. This is Cytochrome b559 subunit beta from Gracilaria tenuistipitata var. liui (Red alga).